The sequence spans 598 residues: Beta-myrcene/(E)-beta-ocimene synthase 2, chloroplastic (598 aa).

The N-terminal 30 residues, 1–30, are a transit peptide targeting the chloroplast; the sequence is MATLCIGSAPIYQNACIHNFRLQRPRRFIS. (2E)-geranyl diphosphate-binding residues include arginine 307, aspartate 344, aspartate 348, arginine 486, and asparagine 489. Mg(2+) is bound by residues aspartate 344 and aspartate 348. Positions 344-348 match the DDXXD motif motif; it reads DDIYD. The Mg(2+) site is built by asparagine 489, threonine 493, and glutamate 497.

Belongs to the terpene synthase family. Tpsb subfamily. Mg(2+) serves as cofactor. Requires Mn(2+) as cofactor. Expressed exclusively in mature flowers, but not in inmmature buds.

Its subcellular location is the plastid. It is found in the chloroplast. It carries out the reaction (2E)-geranyl diphosphate = beta-myrcene + diphosphate. The protein operates within secondary metabolite biosynthesis; terpenoid biosynthesis. In terms of biological role, involved in monoterpene (C10) biosynthesis. The major products are alpha- and beta-pinene, sabinene, beta-myrcene, (E)-beta-ocimene and limonene. This chain is Beta-myrcene/(E)-beta-ocimene synthase 2, chloroplastic (TPS24), found in Arabidopsis thaliana (Mouse-ear cress).